The chain runs to 100 residues: Urease subunit gamma (100 aa).

It belongs to the urease gamma subunit family. As to quaternary structure, heterotrimer of UreA (gamma), UreB (beta) and UreC (alpha) subunits. Three heterotrimers associate to form the active enzyme.

The protein resides in the cytoplasm. It catalyses the reaction urea + 2 H2O + H(+) = hydrogencarbonate + 2 NH4(+). It functions in the pathway nitrogen metabolism; urea degradation; CO(2) and NH(3) from urea (urease route): step 1/1. In Synechococcus sp. (strain WH7805), this protein is Urease subunit gamma.